The following is a 313-amino-acid chain: Olfactory receptor 6E1 (313 aa).

An N-linked (GlcNAc...) asparagine glycan is attached at N3. The next 7 helical transmembrane spans lie at 25 to 45, 64 to 84, 96 to 116, 142 to 162, 192 to 212, 238 to 258, and 271 to 291; these read IFLG…LIIF, FAML…TNII, FLQA…LAVM, LVFC…SIVF, LVEF…LAVT, TCSS…FMYV, and KVVA…IYTL. C95 and C177 are joined by a disulfide.

This sequence belongs to the G-protein coupled receptor 1 family.

Its subcellular location is the cell membrane. Odorant receptor. Activated by (-)-citronellal and to a lesser extent by (+)-citronellal. Not activated by carvone or limonene. The sequence is that of Olfactory receptor 6E1 from Mus musculus (Mouse).